The following is a 520-amino-acid chain: Peptide chain release factor 3 (520 aa).

Residues 8 to 273 (ESRKTFAIIS…AYVDHAPMPN (266 aa)) form the tr-type G domain. Residues 17-24 (SHPDAGKT), 85-89 (DTPGH), and 139-142 (NKLD) contribute to the GTP site.

This sequence belongs to the TRAFAC class translation factor GTPase superfamily. Classic translation factor GTPase family. PrfC subfamily.

It is found in the cytoplasm. Functionally, increases the formation of ribosomal termination complexes and stimulates activities of RF-1 and RF-2. It binds guanine nucleotides and has strong preference for UGA stop codons. It may interact directly with the ribosome. The stimulation of RF-1 and RF-2 is significantly reduced by GTP and GDP, but not by GMP. This chain is Peptide chain release factor 3, found in Staphylococcus carnosus (strain TM300).